A 274-amino-acid polypeptide reads, in one-letter code: SPbeta prophage-derived uncharacterized protein YomD (274 aa).

This Bacillus subtilis (strain 168) protein is SPbeta prophage-derived uncharacterized protein YomD (yomD).